Consider the following 317-residue polypeptide: 4-hydroxy-3-methylbut-2-enyl diphosphate reductase (317 aa).

Cys-12 contacts [4Fe-4S] cluster. (2E)-4-hydroxy-3-methylbut-2-enyl diphosphate contacts are provided by His-41 and His-74. His-41 and His-74 together coordinate dimethylallyl diphosphate. Residues His-41 and His-74 each contribute to the isopentenyl diphosphate site. Cys-97 is a binding site for [4Fe-4S] cluster. Residue His-125 participates in (2E)-4-hydroxy-3-methylbut-2-enyl diphosphate binding. Position 125 (His-125) interacts with dimethylallyl diphosphate. His-125 provides a ligand contact to isopentenyl diphosphate. The active-site Proton donor is Glu-127. Thr-168 contacts (2E)-4-hydroxy-3-methylbut-2-enyl diphosphate. Residue Cys-198 coordinates [4Fe-4S] cluster. The (2E)-4-hydroxy-3-methylbut-2-enyl diphosphate site is built by Ser-226, Ser-227, Asn-228, and Ser-270. Dimethylallyl diphosphate contacts are provided by Ser-226, Ser-227, Asn-228, and Ser-270. Positions 226, 227, 228, and 270 each coordinate isopentenyl diphosphate.

It belongs to the IspH family. In terms of assembly, homodimer. The cofactor is [4Fe-4S] cluster.

The catalysed reaction is isopentenyl diphosphate + 2 oxidized [2Fe-2S]-[ferredoxin] + H2O = (2E)-4-hydroxy-3-methylbut-2-enyl diphosphate + 2 reduced [2Fe-2S]-[ferredoxin] + 2 H(+). It catalyses the reaction dimethylallyl diphosphate + 2 oxidized [2Fe-2S]-[ferredoxin] + H2O = (2E)-4-hydroxy-3-methylbut-2-enyl diphosphate + 2 reduced [2Fe-2S]-[ferredoxin] + 2 H(+). It participates in isoprenoid biosynthesis; dimethylallyl diphosphate biosynthesis; dimethylallyl diphosphate from (2E)-4-hydroxy-3-methylbutenyl diphosphate: step 1/1. It functions in the pathway isoprenoid biosynthesis; isopentenyl diphosphate biosynthesis via DXP pathway; isopentenyl diphosphate from 1-deoxy-D-xylulose 5-phosphate: step 6/6. Its function is as follows. Catalyzes the conversion of 1-hydroxy-2-methyl-2-(E)-butenyl 4-diphosphate (HMBPP) into a mixture of isopentenyl diphosphate (IPP) and dimethylallyl diphosphate (DMAPP). Acts in the terminal step of the DOXP/MEP pathway for isoprenoid precursor biosynthesis. The polypeptide is 4-hydroxy-3-methylbut-2-enyl diphosphate reductase (Yersinia enterocolitica serotype O:8 / biotype 1B (strain NCTC 13174 / 8081)).